The primary structure comprises 281 residues: Probable endonuclease 4 (281 aa).

Residues His69, His109, Glu145, Asp179, His182, His216, Asp229, His231, and Glu261 each coordinate Zn(2+).

Belongs to the AP endonuclease 2 family. Zn(2+) serves as cofactor.

It catalyses the reaction Endonucleolytic cleavage to 5'-phosphooligonucleotide end-products.. Endonuclease IV plays a role in DNA repair. It cleaves phosphodiester bonds at apurinic or apyrimidinic (AP) sites, generating a 3'-hydroxyl group and a 5'-terminal sugar phosphate. This Aeromonas salmonicida (strain A449) protein is Probable endonuclease 4.